The primary structure comprises 463 residues: Chromosomal replication initiator protein DnaA (463 aa).

Positions M1 to T83 are domain I, interacts with DnaA modulators. Residues T83–S124 form a domain II region. Residues T125–S343 form a domain III, AAA+ region region. Positions 171, 173, 174, and 175 each coordinate ATP. The interval N344 to H463 is domain IV, binds dsDNA.

It belongs to the DnaA family. Oligomerizes as a right-handed, spiral filament on DNA at oriC.

It is found in the cytoplasm. Its function is as follows. Plays an essential role in the initiation and regulation of chromosomal replication. ATP-DnaA binds to the origin of replication (oriC) to initiate formation of the DNA replication initiation complex once per cell cycle. Binds the DnaA box (a 9 base pair repeat at the origin) and separates the double-stranded (ds)DNA. Forms a right-handed helical filament on oriC DNA; dsDNA binds to the exterior of the filament while single-stranded (ss)DNA is stabiized in the filament's interior. The ATP-DnaA-oriC complex binds and stabilizes one strand of the AT-rich DNA unwinding element (DUE), permitting loading of DNA polymerase. After initiation quickly degrades to an ADP-DnaA complex that is not apt for DNA replication. Binds acidic phospholipids. This chain is Chromosomal replication initiator protein DnaA, found in Rickettsia akari (strain Hartford).